Here is a 63-residue protein sequence, read N- to C-terminus: Large ribosomal subunit protein bL35 (63 aa).

The protein belongs to the bacterial ribosomal protein bL35 family.

This chain is Large ribosomal subunit protein bL35, found in Campylobacter jejuni subsp. jejuni serotype O:2 (strain ATCC 700819 / NCTC 11168).